Consider the following 346-residue polypeptide: Mitogen-activated protein kinase kinase 1c (346 aa).

In terms of domain architecture, Protein kinase spans 70–332; sequence LELVRFLGKG…TTDLLKHPFL (263 aa). ATP is bound by residues 76-84 and Lys99; that span reads LGKGAGGTV. The active-site Proton acceptor is Asp194.

The protein belongs to the protein kinase superfamily. STE Ser/Thr protein kinase family. MAP kinase kinase subfamily.

It catalyses the reaction L-seryl-[protein] + ATP = O-phospho-L-seryl-[protein] + ADP + H(+). The catalysed reaction is L-threonyl-[protein] + ATP = O-phospho-L-threonyl-[protein] + ADP + H(+). The enzyme catalyses L-tyrosyl-[protein] + ATP = O-phospho-L-tyrosyl-[protein] + ADP + H(+). In terms of biological role, the CERK1, MEKK1a/b, MKK1a/b/c and MPK4a/b proteins are involved in pathogen defense. The pathway induces rapid growth inhibition, cell wall depositions and accumulation of defense-related transcripts. This protein is required for full defense response to fungal pathogen chitin. This Physcomitrium patens (Spreading-leaved earth moss) protein is Mitogen-activated protein kinase kinase 1c.